A 280-amino-acid chain; its full sequence is Transcription factor ovo-like homolog lin-48 (280 aa).

4 consecutive C2H2-type zinc fingers follow at residues 133 to 155 (LTCH…IKCH), 161 to 183 (YLCT…TRTH), 189 to 212 (YKCE…RKVH), and 228 to 251 (FVCE…KVVH).

The protein resides in the nucleus. Transcription factor. Involved in development of the hindgut, the male tail, and the excretory duct cell. Involved in modulating function of excretory duct cells. Plays a role in left/right patterning of cell fates in the hindgut. This is Transcription factor ovo-like homolog lin-48 from Caenorhabditis elegans.